The chain runs to 127 residues: Anti-adapter protein IraD (127 aa).

This sequence belongs to the GpW/Gp25 family. IraD subfamily. As to quaternary structure, interacts with RssB.

Its subcellular location is the cytoplasm. Inhibits RpoS proteolysis by regulating RssB activity, thereby increasing the stability of the sigma stress factor RpoS during oxidative stress. Its effect on RpoS stability is due to its interaction with RssB, which probably blocks the interaction of RssB with RpoS, and the consequent delivery of the RssB-RpoS complex to the ClpXP protein degradation pathway. The sequence is that of Anti-adapter protein IraD from Escherichia coli (strain UTI89 / UPEC).